The primary structure comprises 93 residues: Small ribosomal subunit protein bS18 (93 aa).

It belongs to the bacterial ribosomal protein bS18 family. Part of the 30S ribosomal subunit. Forms a tight heterodimer with protein bS6.

Functionally, binds as a heterodimer with protein bS6 to the central domain of the 16S rRNA, where it helps stabilize the platform of the 30S subunit. This Acidovorax ebreus (strain TPSY) (Diaphorobacter sp. (strain TPSY)) protein is Small ribosomal subunit protein bS18.